Reading from the N-terminus, the 487-residue chain is Catalase (487 aa).

The tract at residues 1 to 20 (MSQRVLTTESGAPVADNQNS) is disordered. Residues His-54 and Asn-127 contribute to the active site. Position 337 (Tyr-337) interacts with heme.

It belongs to the catalase family. Heme serves as cofactor.

The enzyme catalyses 2 H2O2 = O2 + 2 H2O. Functionally, decomposes hydrogen peroxide into water and oxygen; serves to protect cells from the toxic effects of hydrogen peroxide. This chain is Catalase (katA), found in Streptomyces coelicolor (strain ATCC BAA-471 / A3(2) / M145).